Consider the following 153-residue polypeptide: MYKVQLLSCIALTLALLTSSAPTSSSTKETQEQLDQLLLDLQVLLKGVNDYKNSKLSRMLTFKFYMPKKVTELKHLQCLEEELKPLEEVLNLAQGKNSHGGNTRESISNINVTVLKLKGSETFMCEYDETVTIVEFLNRWITFCQSIISASSS.

The N-terminal stretch at 1–20 is a signal peptide; the sequence is MYKVQLLSCIALTLALLTSS. A glycan (O-linked (GalNAc...) threonine) is linked at T23. An intrachain disulfide couples C78 to C125. N111 carries an N-linked (GlcNAc...) asparagine glycan.

This sequence belongs to the IL-2 family.

It is found in the secreted. Cytokine produced by activated CD4-positive helper T-cells and to a lesser extend activated CD8-positive T-cells and natural killer (NK) cells that plays pivotal roles in the immune response and tolerance. Binds to a receptor complex composed of either the high-affinity trimeric IL-2R (IL2RA/CD25, IL2RB/CD122 and IL2RG/CD132) or the low-affinity dimeric IL-2R (IL2RB and IL2RG). Interaction with the receptor leads to oligomerization and conformation changes in the IL-2R subunits resulting in downstream signaling starting with phosphorylation of JAK1 and JAK3. In turn, JAK1 and JAK3 phosphorylate the receptor to form a docking site leading to the phosphorylation of several substrates including STAT5. This process leads to activation of several pathways including STAT, phosphoinositide-3-kinase/PI3K and mitogen-activated protein kinase/MAPK pathways. Functions as a T-cell growth factor and can increase NK-cell cytolytic activity as well. Promotes strong proliferation of activated B-cells and subsequently immunoglobulin production. Plays a pivotal role in regulating the adaptive immune system by controlling the survival and proliferation of regulatory T-cells, which are required for the maintenance of immune tolerance. Moreover, participates in the differentiation and homeostasis of effector T-cell subsets, including Th1, Th2, Th17 as well as memory CD8-positive T-cells. The polypeptide is Interleukin-2 (IL2) (Oryctolagus cuniculus (Rabbit)).